The primary structure comprises 293 residues: SAGA-associated factor 29 (293 aa).

Positions 3–88 (LVSADSRIAE…KALDKIAEIK (86 aa)) form a coiled coil. Residues 152-293 (GDYVARPGDK…VVACKEPKKK (142 aa)) form the SGF29 C-terminal domain. Histone H3K4me3 N-terminus binding regions lie at residues 194 to 196 (DID) and 240 to 243 (QTTC). Residues 264-266 (FED) form a histone H3K4me3 binding region. Lysine 288 carries the post-translational modification N6-acetyllysine.

Belongs to the SGF29 family. As to quaternary structure, interacts with dimethylated and trimethylated 'Lys-4' of histone H3 (H3K4me2 and H3K4me3), with a preference for the trimethylated form (H3K4me3). Component of some SAGA-type complexes. Component of the ADA2A-containing complex (ATAC), composed of KAT14, KAT2A, TADA2L, TADA3L, ZZ3, MBIP, WDR5, YEATS2, CCDC101 and DR1. Interacts with (methylated) CGAS. Interacts with TADA3L, GCN5L2, SUPT3H and MYC.

The protein localises to the nucleus. Chromatin reader component of some histone acetyltransferase (HAT) SAGA-type complexes like the TFTC-HAT, ATAC or STAGA complexes. SGF29 specifically recognizes and binds methylated 'Lys-4' of histone H3 (H3K4me), with a preference for trimethylated form (H3K4me3). In the SAGA-type complexes, SGF29 is required to recruit complexes to H3K4me. Involved in the response to endoplasmic reticulum (ER) stress by recruiting the SAGA complex to H3K4me, thereby promoting histone H3 acetylation and cell survival. Also binds non-histone proteins that are methylated on Lys residues: specifically recognizes and binds CGAS monomethylated on 'Lys-506'. This chain is SAGA-associated factor 29, found in Homo sapiens (Human).